A 479-amino-acid chain; its full sequence is Ammonium transporter Rh type C (479 aa).

The Cytoplasmic portion of the chain corresponds to Met1–Trp9. A helical transmembrane segment spans residues Arg10–Val30. The Extracellular portion of the chain corresponds to Arg31 to Tyr60. A glycan (N-linked (GlcNAc...) asparagine) is linked at Asn48. The chain crosses the membrane as a helical span at residues Pro61–Leu81. The Cytoplasmic portion of the chain corresponds to Gln82 to Gly85. Residues Phe86–Met106 form a helical membrane-spanning segment. The Extracellular portion of the chain corresponds to Gln107–Glu123. A helical transmembrane segment spans residues Asn124–Gly144. Over Lys145 to Pro148 the chain is Cytoplasmic. The chain crosses the membrane as a helical span at residues Ile149–Leu169. At Leu170 to Asp177 the chain is on the extracellular side. A helical transmembrane segment spans residues Ala178–Tyr200. Residues Arg201–Asp218 lie on the Cytoplasmic side of the membrane. Residues Leu219–Ile239 traverse the membrane as a helical segment. At Ser240–Ala250 the chain is on the extracellular side. Residues Ile251–Leu271 traverse the membrane as a helical segment. Residues His272 to His281 are Cytoplasmic-facing. A helical transmembrane segment spans residues Ile282–Met302. Residue Pro303 is a topological domain, extracellular. The chain crosses the membrane as a helical span at residues Tyr304 to Leu324. Residues Thr325–Gly345 are Cytoplasmic-facing. Residues Ile346–Val366 form a helical membrane-spanning segment. Residues Tyr367–Gln394 lie on the Extracellular side of the membrane. Residues Ile395 to Ile415 form a helical membrane-spanning segment. Topologically, residues Leu416–Pro479 are cytoplasmic.

This sequence belongs to the ammonium transporter (TC 2.A.49) family. Rh subfamily. As to quaternary structure, homotrimer. Post-translationally, N-glycosylated.

It is found in the cell membrane. It localises to the apical cell membrane. The enzyme catalyses NH4(+)(in) = NH4(+)(out). It carries out the reaction methylamine(out) = methylamine(in). The catalysed reaction is CO2(out) = CO2(in). Functionally, ammonium transporter involved in the maintenance of acid-base homeostasis. Transports ammonium and its related derivative methylammonium across the plasma membrane of epithelial cells likely contributing to renal transepithelial ammonia transport and ammonia metabolism. Postulated to primarily mediate an electroneutral bidirectional transport of NH3 ammonia species according to a mechanism that implies interaction of an NH4(+) ion with acidic residues of the pore entry followed by dissociation of NH4(+) into NH3 and H(+). As a result NH3 transits through the central pore and is protonated on the extracellular side reforming NH4(+). May act as a CO2 channel providing for renal acid secretion. This is Ammonium transporter Rh type C (RHCG) from Pan troglodytes (Chimpanzee).